Here is a 559-residue protein sequence, read N- to C-terminus: Thrombospondin-related anonymous protein (559 aa).

An N-terminal signal peptide occupies residues 1–25 (MNHLGNVKYLVIVFLIFFDLFLVNG). Residues 26–496 (RDVQNNIVDE…KKGESDNKYK (471 aa)) lie on the Extracellular side of the membrane. The 187-residue stretch at 48–234 (DLYLLMDCSG…NVIGPFMKAV (187 aa)) folds into the VWFA domain. Isoglutamyl lysine isopeptide (Gln-Lys) (interchain with K-? in Factor 3(A)) cross-links involve residues glutamine 77 and glutamine 78. N-linked (GlcNAc...) asparagine glycosylation is present at asparagine 132. A TSP type-1 domain is found at 241–287 (TASCGVWDEWSPCSVTCGKGTRSRKREILHEGCTSEIQEQCEEERCP). 3 disulfides stabilise this stretch: cysteine 244/cysteine 273, cysteine 253/cysteine 281, and cysteine 257/cysteine 286. Residues 280–496 (QCEEERCPPK…KKGESDNKYK (217 aa)) are disordered. Over residues 283–292 (EERCPPKWEP) the composition is skewed to basic and acidic residues. A Cell attachment site motif is present at residues 307–309 (RGD). Asparagine 310 is a glycosylation site (N-linked (GlcNAc...) asparagine). A compositionally biased stretch (basic and acidic residues) spans 370-400 (KEVPSDVPKNPEDDREENFDIPKKPENKHDN). Positions 431–440 (DPQSQDNNGN) are enriched in polar residues. The segment covering 444-459 (PNSEDRETRPHGRNNE) has biased composition (basic and acidic residues). Asparagine 460 carries an N-linked (GlcNAc...) asparagine glycan. The span at 466 to 495 (KYNDTPKHPEREEHEKPDNNKKKGESDNKY) shows a compositional bias: basic and acidic residues. Residues 497–515 (IAGGIAGGLALLACAGLAY) form a helical membrane-spanning segment. Topologically, residues 516-559 (KFVVPGAATPYAGEPAPFDETLGEEDKDLDEPEQFRLPEENEWN) are cytoplasmic. Residues 523–559 (ATPYAGEPAPFDETLGEEDKDLDEPEQFRLPEENEWN) form a disordered region. The segment covering 536–547 (TLGEEDKDLDEP) has biased composition (acidic residues). A compositionally biased stretch (basic and acidic residues) spans 548–559 (EQFRLPEENEWN).

The protein localises to the cell membrane. This chain is Thrombospondin-related anonymous protein (TRAP), found in Plasmodium falciparum.